The sequence spans 194 residues: MLPTVIEQSGQGDRAFDIYSRLLRERIIFLGTDVNDQVADALVAQMLFLEADDPEKDIQLYVNSPGGSVTAGLAIYDTMQQVSPDVITICYGLAASMGAFLLSGGTKGKRLALPNSRIMIHQPLGGAQGQAVEIEIQAKEILYLKETLNSLLAEHTGQNIQKISEDTDRDHFLSPQEAVEYGLIDKVVSNLNSI.

The active-site Nucleophile is Ser96. His121 is a catalytic residue.

Belongs to the peptidase S14 family. Fourteen ClpP subunits assemble into 2 heptameric rings which stack back to back to give a disk-like structure with a central cavity, resembling the structure of eukaryotic proteasomes.

It is found in the cytoplasm. The enzyme catalyses Hydrolysis of proteins to small peptides in the presence of ATP and magnesium. alpha-casein is the usual test substrate. In the absence of ATP, only oligopeptides shorter than five residues are hydrolyzed (such as succinyl-Leu-Tyr-|-NHMec, and Leu-Tyr-Leu-|-Tyr-Trp, in which cleavage of the -Tyr-|-Leu- and -Tyr-|-Trp bonds also occurs).. Its function is as follows. Cleaves peptides in various proteins in a process that requires ATP hydrolysis. Has a chymotrypsin-like activity. Plays a major role in the degradation of misfolded proteins. This is ATP-dependent Clp protease proteolytic subunit 3 from Prochlorococcus marinus (strain NATL2A).